Reading from the N-terminus, the 301-residue chain is Mitochondrial carnitine/acylcarnitine carrier protein (301 aa).

Ala2 is subject to N-acetylalanine. The Cytoplasmic segment spans residues 2 to 12 (ADQPKPISPLK). 3 Solcar repeats span residues 8–99 (ISPL…GKKL), 108–196 (LSYP…VKNI), and 207–293 (LSVP…AMKF). A helical transmembrane segment spans residues 13–31 (NLLAGGFGGVCLVFVGHPL). At 32-73 (DTVKVRLQTQPPSLPGQPPMYSGTFDCFRKTLFREGIRGLYR) the chain is on the mitochondrial matrix side. Residues 74–93 (GMAAPIIGVTPMFAVCFFGF) traverse the membrane as a helical segment. Residues 94-112 (GLGKKLQQKHPEDVLSYPQ) are Cytoplasmic-facing. A helical membrane pass occupies residues 113–131 (LFAAGMLSGIFTTGIMTPG). The Mitochondrial matrix segment spans residues 132–170 (ERIKCLLQIQASSGETKYTGTLDCAKKLYQEFGIRGIYK). N6-acetyllysine is present on residues Lys148 and Lys157. Lys170 is subject to N6-acetyllysine; alternate. At Lys170 the chain carries N6-succinyllysine; alternate. The helical transmembrane segment at 171–190 (GTVVTLMRDVPASGMYFMTY) threads the bilayer. Residues 191–211 (EWVKNIFTPEGKRVSELSVPR) lie on the Cytoplasmic side of the membrane. Residues 212-230 (VLVAGGIAGIFNWAVAIPP) form a helical membrane-spanning segment. At 231-267 (DVLKSRFQTAPPGKYPNGFRDVLRELIPDEGVTSLYK) the chain is on the mitochondrial matrix side. A helical membrane pass occupies residues 268-287 (GFNAVMIRAFPANAACFLGF). The Cytoplasmic portion of the chain corresponds to 288–301 (EVAMKFLNWATPNL).

It belongs to the mitochondrial carrier (TC 2.A.29) family.

Its subcellular location is the mitochondrion inner membrane. It carries out the reaction O-acetyl-(R)-carnitine(in) + (R)-carnitine(out) = O-acetyl-(R)-carnitine(out) + (R)-carnitine(in). The catalysed reaction is an O-acyl-(R)-carnitine(in) + (R)-carnitine(out) = an O-acyl-(R)-carnitine(out) + (R)-carnitine(in). The enzyme catalyses O-propanoyl-(R)-carnitine(in) + (R)-carnitine(out) = O-propanoyl-(R)-carnitine(out) + (R)-carnitine(in). It catalyses the reaction O-hexadecanoyl-(R)-carnitine(in) + (R)-carnitine(out) = O-hexadecanoyl-(R)-carnitine(out) + (R)-carnitine(in). It carries out the reaction O-octanoyl-(R)-carnitine(in) + (R)-carnitine(out) = O-octanoyl-(R)-carnitine(out) + (R)-carnitine(in). The catalysed reaction is (R)-carnitine(in) = (R)-carnitine(out). Mediates the electroneutral exchange of acylcarnitines (O-acyl-(R)-carnitine or L-acylcarnitine) of different acyl chain lengths (ranging from O-acetyl-(R)-carnitine to long-chain O-acyl-(R)-carnitines) with free carnitine ((R)-carnitine or L-carnitine) across the mitochondrial inner membrane, via a ping-pong mechanism. Key player in the mitochondrial oxidation pathway, it translocates the fatty acids in the form of acylcarnitines into the mitochondrial matrix, where the carnitine palmitoyltransferase 2 (CPT-2) activates them to undergo fatty acid beta-oxidation. Catalyzes the unidirectional transport (uniport) of carnitine at lower rates than the antiport (exchange). In Macaca fascicularis (Crab-eating macaque), this protein is Mitochondrial carnitine/acylcarnitine carrier protein (SLC25A20).